Here is a 289-residue protein sequence, read N- to C-terminus: 4-diphosphocytidyl-2-C-methyl-D-erythritol kinase (289 aa).

Lys10 is an active-site residue. An ATP-binding site is contributed by 94–104; the sequence is PVAAGLAGGSS. Asp136 is a catalytic residue.

This sequence belongs to the GHMP kinase family. IspE subfamily.

It carries out the reaction 4-CDP-2-C-methyl-D-erythritol + ATP = 4-CDP-2-C-methyl-D-erythritol 2-phosphate + ADP + H(+). The protein operates within isoprenoid biosynthesis; isopentenyl diphosphate biosynthesis via DXP pathway; isopentenyl diphosphate from 1-deoxy-D-xylulose 5-phosphate: step 3/6. Its function is as follows. Catalyzes the phosphorylation of the position 2 hydroxy group of 4-diphosphocytidyl-2C-methyl-D-erythritol. This is 4-diphosphocytidyl-2-C-methyl-D-erythritol kinase from Bacillus licheniformis (strain ATCC 14580 / DSM 13 / JCM 2505 / CCUG 7422 / NBRC 12200 / NCIMB 9375 / NCTC 10341 / NRRL NRS-1264 / Gibson 46).